We begin with the raw amino-acid sequence, 196 residues long: Protein TEX261 (196 aa).

A run of 5 helical transmembrane segments spans residues 3–23 (FMYV…TLAV), 42–62 (SRII…LYVF), 70–90 (IGVG…FPFI), 97–117 (FILS…FFAE), and 125–145 (VLAY…VSLS).

This sequence belongs to the SVP26 family. In terms of tissue distribution, detected in testis.

It is found in the membrane. This chain is Protein TEX261 (Tex261), found in Mus musculus (Mouse).